The following is a 301-amino-acid chain: GTPase Era (301 aa).

An Era-type G domain is found at 7–175 (YCGFIAIVGR…AAIVRKHLPE (169 aa)). The G1 stretch occupies residues 15–22 (GRPNVGKS). 15–22 (GRPNVGKS) is a GTP binding site. Positions 41–45 (QTTRH) are G2. The segment at 62 to 65 (DTPG) is G3. GTP-binding positions include 62-66 (DTPGL) and 124-127 (NKVD). The interval 124 to 127 (NKVD) is G4. The tract at residues 154-156 (ISA) is G5. Positions 206-283 (LGAELPYSVT…HLELWVKVKS (78 aa)) constitute a KH type-2 domain.

The protein belongs to the TRAFAC class TrmE-Era-EngA-EngB-Septin-like GTPase superfamily. Era GTPase family. As to quaternary structure, monomer.

It is found in the cytoplasm. Its subcellular location is the cell inner membrane. Its function is as follows. An essential GTPase that binds both GDP and GTP, with rapid nucleotide exchange. Plays a role in 16S rRNA processing and 30S ribosomal subunit biogenesis and possibly also in cell cycle regulation and energy metabolism. The protein is GTPase Era of Escherichia coli O1:K1 / APEC.